We begin with the raw amino-acid sequence, 248 residues long: Pulmonary surfactant-associated protein A (248 aa).

Positions Met-1–Cys-20 are cleaved as a signal peptide. One can recognise a Collagen-like domain in the interval Gly-28 to Pro-100. 10 positions are modified to 4-hydroxyproline: Pro-30, Pro-33, Pro-36, Pro-42, Pro-54, Pro-57, Pro-63, Pro-67, Pro-70, and Pro-76. The tract at residues Gly-31 to Phe-99 is disordered. Over residues Pro-42–Lys-51 the composition is skewed to basic and acidic residues. Positions Pro-54–Gly-65 are enriched in pro residues. Over residues Leu-69–Pro-82 the composition is skewed to low complexity. Residues Glu-84 to Glu-93 are compositionally biased toward basic and acidic residues. In terms of domain architecture, C-type lectin spans Ser-133 to Phe-248. 2 disulfide bridges follow: Cys-155/Cys-246 and Cys-224/Cys-238. N-linked (GlcNAc...) asparagine glycosylation occurs at Asn-207. The Ca(2+) site is built by Glu-215, Arg-217, Asn-234, and Asp-235.

The protein belongs to the SFTPA family. In terms of assembly, oligomeric complex of 6 set of homotrimers.

The protein localises to the secreted. The protein resides in the extracellular space. It localises to the extracellular matrix. Its subcellular location is the surface film. Functionally, in presence of calcium ions, it binds to surfactant phospholipids and contributes to lower the surface tension at the air-liquid interface in the alveoli of the mammalian lung and is essential for normal respiration. Enhances the expression of MYO18A/SP-R210 on alveolar macrophages. The polypeptide is Pulmonary surfactant-associated protein A (Sftpa1) (Rattus norvegicus (Rat)).